The following is a 126-amino-acid chain: MSNNNYIVPGEYRVAEGEIEINAGREKTTIRVSNTGDRPIQVGSHIHFVEVNKELLFDRAEGIGRRLNIPSGTAARFEPGEEMEVELTELGGNREVFGISDLTNGSVDNKELILQRAKELGYKGVE.

It belongs to the urease beta subunit family. As to quaternary structure, heterotrimer of UreA (gamma), UreB (beta) and UreC (alpha) subunits. Three heterotrimers associate to form the active enzyme.

It is found in the cytoplasm. The enzyme catalyses urea + 2 H2O + H(+) = hydrogencarbonate + 2 NH4(+). Its pathway is nitrogen metabolism; urea degradation; CO(2) and NH(3) from urea (urease route): step 1/1. In Sporosarcina pasteurii (Bacillus pasteurii), this protein is Urease subunit beta.